Reading from the N-terminus, the 91-residue chain is Small ribosomal subunit protein eS24 (91 aa).

The interval 51–91 (QRRKDAAAHKEAYNAMPEAERRHLNSEKYANRKAEVSYKHR) is disordered.

Belongs to the eukaryotic ribosomal protein eS24 family.

This Caenorhabditis elegans protein is Small ribosomal subunit protein eS24.